The chain runs to 259 residues: UPF0246 protein NMA1114 (259 aa).

Belongs to the UPF0246 family.

The chain is UPF0246 protein NMA1114 from Neisseria meningitidis serogroup A / serotype 4A (strain DSM 15465 / Z2491).